The sequence spans 611 residues: 4-hydroxy-3-methylbut-2-en-1-yl diphosphate synthase (flavodoxin) (611 aa).

Positions 520, 523, 554, and 561 each coordinate [4Fe-4S] cluster.

It belongs to the IspG family. [4Fe-4S] cluster serves as cofactor.

It catalyses the reaction (2E)-4-hydroxy-3-methylbut-2-enyl diphosphate + oxidized [flavodoxin] + H2O + 2 H(+) = 2-C-methyl-D-erythritol 2,4-cyclic diphosphate + reduced [flavodoxin]. It functions in the pathway isoprenoid biosynthesis; isopentenyl diphosphate biosynthesis via DXP pathway; isopentenyl diphosphate from 1-deoxy-D-xylulose 5-phosphate: step 5/6. Converts 2C-methyl-D-erythritol 2,4-cyclodiphosphate (ME-2,4cPP) into 1-hydroxy-2-methyl-2-(E)-butenyl 4-diphosphate. The chain is 4-hydroxy-3-methylbut-2-en-1-yl diphosphate synthase (flavodoxin) from Parabacteroides distasonis (strain ATCC 8503 / DSM 20701 / CIP 104284 / JCM 5825 / NCTC 11152).